A 395-amino-acid polypeptide reads, in one-letter code: Dual specificity protein phosphatase 4 (395 aa).

V2 carries the post-translational modification N-acetylvaline. Residues 42 to 160 (SGGKCLLLDC…FSSEYPEFCS (119 aa)) form the Rhodanese domain. Residues 196–337 (GPVEILPFLY…LLQFESQVLT (142 aa)) enclose the Tyrosine-protein phosphatase domain. C281 (phosphocysteine intermediate) is an active-site residue. 2 positions are modified to phosphoserine; by MAPK: S387 and S392.

It belongs to the protein-tyrosine phosphatase family. Non-receptor class dual specificity subfamily. As to quaternary structure, hollow spherical complex composed of 24 subunits with pseudooctahedral symmetry, has a tetramer as the basic unit. Phosphorylation in the C-terminus by ERK1/2 inhibits proteasomal degradation and stabilizes the protein. In terms of tissue distribution, expressed at moderate levels in nearly all tissues and cells including brain, spleen, and testes with the higher expression in the heart and lung and lower expression in skeletal muscle and kidney. Undetectable in liver. Expressed in many areas of the brain with very strong expression in the hippocampus, piriform cortex, and the suprachiasmatic nucleus.

The protein resides in the nucleus. The catalysed reaction is O-phospho-L-tyrosyl-[protein] + H2O = L-tyrosyl-[protein] + phosphate. It carries out the reaction O-phospho-L-seryl-[protein] + H2O = L-seryl-[protein] + phosphate. The enzyme catalyses O-phospho-L-threonyl-[protein] + H2O = L-threonyl-[protein] + phosphate. Functionally, regulates mitogenic signal transduction by dephosphorylating both Thr and Tyr residues on MAP kinases ERK1 and ERK2. This chain is Dual specificity protein phosphatase 4 (Dusp4), found in Rattus norvegicus (Rat).